We begin with the raw amino-acid sequence, 285 residues long: Sulfotransferase 2A1 (285 aa).

3'-phosphoadenylyl sulfate is bound by residues Lys44, Ser45, Gly46, Thr47, Asn48, and Trp49. His99 serves as the catalytic Proton acceptor. 3'-phosphoadenylyl sulfate is bound by residues Arg121, Ser129, Tyr184, Ser218, Met223, Arg247, Lys248, and Gly249.

It belongs to the sulfotransferase 1 family. In terms of assembly, homodimer. In terms of tissue distribution, highly expressed in liver.

It is found in the cytoplasm. The enzyme catalyses an alcohol + 3'-phosphoadenylyl sulfate = an alkyl sulfate + adenosine 3',5'-bisphosphate + H(+). It carries out the reaction taurolithocholate + 3'-phosphoadenylyl sulfate = taurolithocholate 3-sulfate + adenosine 3',5'-bisphosphate + H(+). The catalysed reaction is pregnenolone + 3'-phosphoadenylyl sulfate = pregnenolone sulfate + adenosine 3',5'-bisphosphate + H(+). It catalyses the reaction 3beta-hydroxyandrost-5-en-17-one + 3'-phosphoadenylyl sulfate = dehydroepiandrosterone 3-sulfate + adenosine 3',5'-bisphosphate + H(+). The enzyme catalyses lithocholate + 3'-phosphoadenylyl sulfate = lithocholate sulfate + adenosine 3',5'-bisphosphate + H(+). It carries out the reaction (24S)-hydroxycholesterol + 3'-phosphoadenylyl sulfate = (24S)-hydroxycholesterol 24-sulfate + adenosine 3',5'-bisphosphate + H(+). The catalysed reaction is (24S)-hydroxycholesterol + 3'-phosphoadenylyl sulfate = (24S)-hydroxycholesterol 3-sulfate + adenosine 3',5'-bisphosphate + H(+). It catalyses the reaction (24S)-hydroxycholesterol 24-sulfate + 3'-phosphoadenylyl sulfate = (24S)-hydroxycholesterol 3,24-disulfate + adenosine 3',5'-bisphosphate + H(+). The enzyme catalyses androsterone + 3'-phosphoadenylyl sulfate = androsterone 3alpha-sulfate + adenosine 3',5'-bisphosphate + H(+). In terms of biological role, sulfotransferase that utilizes 3'-phospho-5'-adenylyl sulfate (PAPS) as sulfonate donor to catalyze the sulfonation of steroids and bile acids in the liver and adrenal glands. Mediates the sulfation of a wide range of steroids and sterols, including pregnenolone, androsterone, DHEA, bile acids, cholesterol and as well many xenobiotics that contain alcohol and phenol functional groups. Sulfonation increases the water solubility of most compounds, and therefore their renal excretion, but it can also result in bioactivation to form active metabolites. Plays an important role in maintening steroid and lipid homeostasis. Plays a key role in bile acid metabolism. In addition, catalyzes the metabolic activation of potent carcinogenic polycyclic arylmethanols. The protein is Sulfotransferase 2A1 (Sult2a1) of Mus musculus (Mouse).